Consider the following 337-residue polypeptide: RNA 3'-terminal phosphate cyclase (337 aa).

ATP is bound by residues Q100 and 281–285 (YMGDQ). H306 acts as the Tele-AMP-histidine intermediate in catalysis.

The protein belongs to the RNA 3'-terminal cyclase family. Type 1 subfamily.

The protein localises to the cytoplasm. It catalyses the reaction a 3'-end 3'-phospho-ribonucleotide-RNA + ATP = a 3'-end 2',3'-cyclophospho-ribonucleotide-RNA + AMP + diphosphate. Catalyzes the conversion of 3'-phosphate to a 2',3'-cyclic phosphodiester at the end of RNA. The mechanism of action of the enzyme occurs in 3 steps: (A) adenylation of the enzyme by ATP; (B) transfer of adenylate to an RNA-N3'P to produce RNA-N3'PP5'A; (C) and attack of the adjacent 2'-hydroxyl on the 3'-phosphorus in the diester linkage to produce the cyclic end product. The biological role of this enzyme is unknown but it is likely to function in some aspects of cellular RNA processing. This Methanothermobacter thermautotrophicus (strain ATCC 29096 / DSM 1053 / JCM 10044 / NBRC 100330 / Delta H) (Methanobacterium thermoautotrophicum) protein is RNA 3'-terminal phosphate cyclase (rtcA).